The sequence spans 429 residues: Forkhead box protein P3 (429 aa).

Residues 1–67 (MPNPRPAKPM…SSLNPLPPSQ (67 aa)) form a disordered region. A Phosphoserine; by CDK2 modification is found at Ser19. Lys31 carries the N6-acetyllysine modification. The segment covering 56–67 (TSSSLNPLPPSQ) has biased composition (low complexity). The Nuclear export signal signature appears at 67–75 (QLQLPTVPL). Positions 91-95 (LQALL) match the LXXLL motif motif. The tract at residues 105–189 (LSTVDAHAQT…SNLLAAPQGS (85 aa)) is essential for transcriptional repressor activity and for interaction with KAT5 and HDAC7. The interval 148–198 (LPPGINVASLEWVSREPALLCTFPRSGTPRKDSNLLAAPQGSYPLLANGVC) is interaction with IKZF4. Residue Thr175 is modified to Phosphothreonine; by CDK2. The C2H2-type zinc finger occupies 196-221 (GVCKWPGCEKVFEEPEEFLKHCQADH). The short motif at 238-247 (VQSLEQQLEL) is the Nuclear export signal element. Residues 238 to 259 (VQSLEQQLELEKEKLGAMQAHL) form a leucine-zipper region. Residues Lys249 and Lys251 each participate in a glycyl lysine isopeptide (Lys-Gly) (interchain with G-Cter in ubiquitin) cross-link. Residues Lys262 and Lys267 each carry the N6-acetyllysine; alternate modification. Glycyl lysine isopeptide (Lys-Gly) (interchain with G-Cter in ubiquitin); alternate cross-links involve residues Lys262 and Lys267. The segment at 277–336 (SSCCIVATSTQGSVLPAWSAPREAPDGGLFAVRRHLWGSHGNSSFPEFFHNMDYFKYHNM) is interaction with RUNX1. Positions 337–423 (RPPFTYATLI…RKKRSQRPNK (87 aa)) form a DNA-binding region, fork-head. Residue Lys393 forms a Glycyl lysine isopeptide (Lys-Gly) (interchain with G-Cter in ubiquitin) linkage. The short motif at 414 to 417 (RKKR) is the Nuclear localization signal element. At Ser418 the chain carries Phosphoserine. Residues 418-429 (SQRPNKCSNPCP) constitute a propeptide that is removed on maturation.

In terms of assembly, homodimer. Dimerization is essential for its transcriptional regulator activity. Interacts with IKZF3. Interacts (via LXXLL motif) with isoform 4 of RORA (via AF-2 motif). Interacts with STUB1 and HSPA1A/B. Interacts with IKZF4, HDAC7 and KAT5. Interacts with RUNX1, RUNX2, RUNX3 and NFATC2. Interacts with RORC. Interacts with HDAC9 in the absence of T-cell stimulation. Interacts with RELA, PPP1CA, PPP1CB, PPP1CG, HSPA8 and USP7. In terms of processing, acetylation on lysine residues stabilizes FOXP3 and promotes differentiation of T-cells into induced regulatory T-cells (iTregs) associated with suppressive functions. Acetylation is mediated by a coordinated action of KAT5 and EP300/p300 acetyltransferases: EP300/p300 is required to enhance KAT5 autoacetylation, promoting acetylation of FOXP3 by KAT5. Deacetylated by SIRT1. Polyubiquitinated, leading to its proteasomal degradation in regulatory T-cells (Treg) which is mediated by STUB1 in a HSPA1A/B-dependent manner. Deubiquitinated by USP7 and USP44 leading to increase in protein stability. Post-translationally, phosphorylation at Ser-418 regulates its transcriptional repressor activity and consequently, regulatory T-cells (Treg) suppressive function. Phosphorylation by CDK2 negatively regulates its transcriptional activity and protein stability. In terms of processing, undergoes proteolytic cleavage in activated regulatory T-cells (Treg), and can be cleaved at either the N- or C-terminal site, or at both sites. Treg expressing the form cleaved at C-terminal site or both N- and C-terminal sites exhibit an increased induction of IL10 and an increased capacity to suppress proliferation of conventional T-cells in vitro. Treg expressing the form cleaved at only the C-terminal site are highly effective at preventing experimental colitis in an in vivo model of inflammatory bowel disease. In terms of tissue distribution, high level of expression in thymus and spleen.

It localises to the nucleus. It is found in the cytoplasm. Transcriptional regulator which is crucial for the development and inhibitory function of regulatory T-cells (Treg). Plays an essential role in maintaining homeostasis of the immune system by allowing the acquisition of full suppressive function and stability of the Treg lineage, and by directly modulating the expansion and function of conventional T-cells. Can act either as a transcriptional repressor or a transcriptional activator depending on its interactions with other transcription factors, histone acetylases and deacetylases. The suppressive activity of Treg involves the coordinate activation of many genes, including CTLA4 and TNFRSF18 by FOXP3 along with repression of genes encoding cytokines such as interleukin-2 (IL2) and interferon-gamma (IFNG). Inhibits cytokine production and T-cell effector function by repressing the activity of two key transcription factors, RELA and NFATC2. Mediates transcriptional repression of IL2 via its association with histone acetylase KAT5 and histone deacetylase HDAC7. Can activate the expression of TNFRSF18, IL2RA and CTLA4 and repress the expression of IL2 and IFNG via its association with transcription factor RUNX1. Inhibits the differentiation of IL17 producing helper T-cells (Th17) by antagonizing RORC function, leading to down-regulation of IL17 expression, favoring Treg development. Inhibits the transcriptional activator activity of RORA. Can repress the expression of IL2 and IFNG via its association with transcription factor IKZF4. In Mus musculus (Mouse), this protein is Forkhead box protein P3 (Foxp3).